A 335-amino-acid polypeptide reads, in one-letter code: Capsular polysaccharide phosphotransferase WcwK (335 aa).

This sequence belongs to the stealth family.

The polypeptide is Capsular polysaccharide phosphotransferase WcwK (wcwK) (Streptococcus pneumoniae).